A 705-amino-acid chain; its full sequence is Calpain-1 catalytic subunit (705 aa).

In terms of domain architecture, Calpain catalytic spans 48 to 347; the sequence is LFRDPQFPAG…FSRLEICNLT (300 aa). Residues Cys-108, His-265, and Asn-289 contribute to the active site. Residues 348–517 are domain III; that stretch reads PDALTKDELS…KQSDTAELDE (170 aa). The interval 518-533 is linker; the sequence is EISADLADEEEITEDD. Positions 530-565 constitute an EF-hand 1 domain; that stretch reads TEDDIEDGFKNMFQQLAGEDMEISVFELKTILNRVI. The domain IV stretch occupies residues 534–704; it reads IEDGFKNMFQ…LAEWLLLTMC (171 aa). Ca(2+) contacts are provided by Asp-549, Glu-551, Glu-556, Asp-589, Asp-591, Ser-593, Arg-595, Glu-600, Asp-619, Asp-621, Ser-623, Thr-625, and Glu-630. EF-hand domains are found at residues 606-641 and 671-705; these read NKIR…AGFK and VKLE…TMCG.

This sequence belongs to the peptidase C2 family. Heterodimer of large (catalytic) and a small (regulatory) subunit. It depends on Ca(2+) as a cofactor. The N-terminus is blocked. As to expression, ubiquitously expressed.

The protein resides in the cytoplasm. The protein localises to the cell membrane. It catalyses the reaction Broad endopeptidase specificity.. With respect to regulation, activated by micromolar concentrations of calcium and inhibited by calpastatin. Its function is as follows. Calcium-regulated non-lysosomal thiol-protease which catalyze limited proteolysis of substrates involved in cytoskeletal remodeling and signal transduction. The protein is Calpain-1 catalytic subunit of Gallus gallus (Chicken).